The chain runs to 546 residues: Chaperonin GroEL (546 aa).

ATP contacts are provided by residues 29 to 32, Lys50, 86 to 90, Gly414, 477 to 479, and Asp493; these read TLGP, DGTTT, and NAL.

The protein belongs to the chaperonin (HSP60) family. As to quaternary structure, forms a cylinder of 14 subunits composed of two heptameric rings stacked back-to-back. Interacts with the co-chaperonin GroES.

The protein localises to the cytoplasm. It carries out the reaction ATP + H2O + a folded polypeptide = ADP + phosphate + an unfolded polypeptide.. Functionally, together with its co-chaperonin GroES, plays an essential role in assisting protein folding. The GroEL-GroES system forms a nano-cage that allows encapsulation of the non-native substrate proteins and provides a physical environment optimized to promote and accelerate protein folding. This is Chaperonin GroEL from Leptospira interrogans serogroup Icterohaemorrhagiae serovar copenhageni (strain Fiocruz L1-130).